We begin with the raw amino-acid sequence, 313 residues long: Beta-lactamase (313 aa).

Positions 1 to 15 are cleaved as a signal peptide; the sequence is MQRIGVTDYTILGTV. The active-site Acyl-ester intermediate is the Ser-190.

It belongs to the class-C beta-lactamase family.

The enzyme catalyses a beta-lactam + H2O = a substituted beta-amino acid. In terms of biological role, upon expression in E.coli enables the latter to utilize penicillin as a carbon source. This is Beta-lactamase (penA) from Burkholderia multivorans (strain ATCC 17616 / 249).